A 335-amino-acid chain; its full sequence is Cut9-interacting protein scn1 (335 aa).

This sequence belongs to the metallo-dependent hydrolases superfamily.

Functionally, interacts with cut9. This Schizosaccharomyces pombe (strain 972 / ATCC 24843) (Fission yeast) protein is Cut9-interacting protein scn1 (scn1).